The sequence spans 115 residues: NADH-ubiquinone oxidoreductase chain 3 (115 aa).

Helical transmembrane passes span Leu4–Leu24, Phe55–Ile75, and Ile84–Tyr104.

It belongs to the complex I subunit 3 family. As to quaternary structure, core subunit of respiratory chain NADH dehydrogenase (Complex I) which is composed of 45 different subunits. Interacts with TMEM186. Interacts with TMEM242.

The protein resides in the mitochondrion inner membrane. It carries out the reaction a ubiquinone + NADH + 5 H(+)(in) = a ubiquinol + NAD(+) + 4 H(+)(out). Its function is as follows. Core subunit of the mitochondrial membrane respiratory chain NADH dehydrogenase (Complex I) which catalyzes electron transfer from NADH through the respiratory chain, using ubiquinone as an electron acceptor. Essential for the catalytic activity of complex I. This is NADH-ubiquinone oxidoreductase chain 3 from Ochrotomys nuttalli (Golden mouse).